The following is a 242-amino-acid chain: Zinc-finger homeodomain protein 13 (242 aa).

The segment at 64–111 (YYECRKNHAADIGTTAYDGCGEFVSSTGEEDSLNCAACGCHRNFHREE) adopts a ZF-HD dimerization-type; degenerate zinc-finger fold. Residues 144–166 (GGKSEGKKKKKEKESYGGDPIIK) form a disordered region. Residues 155-166 (EKESYGGDPIIK) show a composition bias toward basic and acidic residues. A DNA-binding region (homeobox) is located at residues 179 to 238 (VKRLKTKFTAEQTEKMRDYAEKLRWKVRPERQEEVEEFCVEIGVNRKNFRIWMNNHKDKI).

Homo- and heterodimer with other ZFHD proteins. Interacts with MIF1, MIF2 and MIF3; these interactions prevent nuclear localization and DNA-binding to inhibit transcription regulation activity. Binds to ZHD11. In terms of tissue distribution, mostly expressed in flowers.

Its subcellular location is the nucleus. Its function is as follows. Putative transcription factor. This Arabidopsis thaliana (Mouse-ear cress) protein is Zinc-finger homeodomain protein 13 (ZHD13).